Consider the following 91-residue polypeptide: Large ribosomal subunit protein uL22 (91 aa).

The protein belongs to the universal ribosomal protein uL22 family. As to quaternary structure, part of the 50S ribosomal subunit.

Its function is as follows. This protein binds specifically to 23S rRNA; its binding is stimulated by other ribosomal proteins, e.g. L4, L17, and L20. It is important during the early stages of 50S assembly. It makes multiple contacts with different domains of the 23S rRNA in the assembled 50S subunit and ribosome. Functionally, the globular domain of the protein is located near the polypeptide exit tunnel on the outside of the subunit, while an extended beta-hairpin is found that lines the wall of the exit tunnel in the center of the 70S ribosome. In Clover yellow edge phytoplasma, this protein is Large ribosomal subunit protein uL22 (rplV).